Consider the following 311-residue polypeptide: Formimidoylglutamase (311 aa).

The Mn(2+) site is built by H130, D155, H157, D159, C242, and D244.

Belongs to the arginase family. Mn(2+) is required as a cofactor.

The enzyme catalyses N-formimidoyl-L-glutamate + H2O = formamide + L-glutamate. Its pathway is amino-acid degradation; L-histidine degradation into L-glutamate; L-glutamate from N-formimidoyl-L-glutamate (hydrolase route): step 1/1. Catalyzes the conversion of N-formimidoyl-L-glutamate to L-glutamate and formamide. This is Formimidoylglutamase from Staphylococcus aureus (strain Mu3 / ATCC 700698).